Consider the following 59-residue polypeptide: Cecropin-A (59 aa).

Positions 1–23 are cleaved as a signal peptide; that stretch reads MNFTKLFLLIAMAVLLLTGQSEA. The propeptide at 58–59 is removed in mature form (AeaeCec2); the sequence is GK.

In terms of tissue distribution, hemolymph (at protein level).

The protein localises to the secreted. Its function is as follows. Antimicrobial peptide. Antibacterial activity against Gram-negative bacteria E.coli D22 and D31, E.carotovora, K.pneumoniae, P.aeruginosa, S.typhimurium, E.cloacae B12 and X.campestris and Gram-positive bacteria A.viridans, M.luteus, B.megaterium and S.pyogenes. Possesses antifungal activity against F.oxysporum, F.culmorum and N.crassa, C.albicans, C.neoformans and S.cerevisiae. No activity against Gram-negative S.marcescens Db11, Gram-positive B.cereus, B.subtilis, B.thuringiensis, S.aureus and L.monocytogenes, the fungi A.fumigatus and B.bassiana and C.glabrata. Partially neutralizes lipopolysaccharides (LPS). Exhibits anti-inflammatory properties: inhibits LPS-induced iNOS/NOS2 transcription, nitric oxide (NO) and pro-inflammatory cytokine production in mouse macrophages and human peripheral blood mononuclear cells (PBMCs); inhibits LPS-induced activation of MAPK and NF-kappa-B signaling pathways in mouse macrophages. In Aedes aegypti (Yellowfever mosquito), this protein is Cecropin-A (CECA).